The chain runs to 281 residues: Carbonic anhydrase (281 aa).

3 residues coordinate Zn(2+): Cys-106, His-161, and Cys-164.

Belongs to the beta-class carbonic anhydrase family. The cofactor is Zn(2+).

Its subcellular location is the cytoplasm. The protein localises to the nucleus. It localises to the mitochondrion intermembrane space. The enzyme catalyses hydrogencarbonate + H(+) = CO2 + H2O. With respect to regulation, amines and amino acids act as activators of catalytic activity, whereas natural product-based phenols, dithiocarbamates, aliphatic and aromatic carboxylates, boronic acids, and sulfonamides act as inhibitors of enzymatic activity. Also inhibited by anions such as cyanide and carbonate, and to a lesser extent by sulfate, phenylboronic, and phenyl arsonic acid. Functionally, catalyzes the reversible hydration of CO(2) to H(2)CO(3). The main role may be to provide inorganic carbon for the bicarbonate-dependent carboxylation reactions catalyzed by pyruvate carboxylase, acetyl-CoA carboxylase and carbamoyl-phosphate synthetase. Involved in protection against oxidative damage. Acts as a CO(2) chemosensor and induces CO(2)-mediated filamentation. Essential for pathological growth in niches where sufficient CO(2) is not supplied by the host. Necessary for white-to-opaque switching at low CO(2) concentrations. This is Carbonic anhydrase (NCE103) from Candida albicans (strain SC5314 / ATCC MYA-2876) (Yeast).